The following is a 626-amino-acid chain: Carnitine O-acetyltransferase (626 aa).

The residue at position 93 (Lys-93) is an N6-succinyllysine. An N6-acetyllysine; alternate modification is found at Lys-261. Lys-261 is modified (N6-succinyllysine; alternate). Lys-268 is modified (N6-acetyllysine). The active-site Proton acceptor is His-343. CoA is bound by residues Lys-419 and 423–430; that span reads KSQKLSPD. The (R)-carnitine site is built by Tyr-452 and Ser-454. CoA is bound at residue Ser-456. Thr-465 is a binding site for (R)-carnitine. The CoA site is built by Arg-504 and Gln-555. The Microbody targeting signal motif lies at 624–626; sequence AKL.

This sequence belongs to the carnitine/choline acetyltransferase family. As to quaternary structure, monomer. Expressed in flagella of epididymal sperm.

It is found in the endoplasmic reticulum. The protein resides in the peroxisome. It localises to the mitochondrion inner membrane. The catalysed reaction is (R)-carnitine + acetyl-CoA = O-acetyl-(R)-carnitine + CoA. The enzyme catalyses propanoyl-CoA + (R)-carnitine = O-propanoyl-(R)-carnitine + CoA. It catalyses the reaction butanoyl-CoA + (R)-carnitine = O-butanoyl-(R)-carnitine + CoA. It carries out the reaction hexanoyl-CoA + (R)-carnitine = O-hexanoyl-(R)-carnitine + CoA. The catalysed reaction is octanoyl-CoA + (R)-carnitine = O-octanoyl-(R)-carnitine + CoA. The enzyme catalyses decanoyl-CoA + (R)-carnitine = O-decanoyl-(R)-carnitine + CoA. It catalyses the reaction 3-methylbutanoyl-CoA + (R)-carnitine = O-3-methylbutanoyl-(R)-carnitine + CoA. It carries out the reaction 2-methylpropanoyl-CoA + (R)-carnitine = O-isobutanoyl-(R)-carnitine + CoA. The catalysed reaction is 2-methylbutanoyl-CoA + (R)-carnitine = O-2-methylbutanoyl-(R)-carnitine + CoA. The enzyme catalyses acetoacetyl-CoA + (R)-carnitine = O-3-oxobutanoyl-(R)-carnitine + CoA. It catalyses the reaction 3-hydroxybutanoyl-CoA + (R)-carnitine = O-3-hydroxybutanoyl-(R)-carnitine + CoA. It carries out the reaction 4,8-dimethylnonanoyl-CoA + (R)-carnitine = O-4,8-dimethylnonanoyl-(R)-carnitine + CoA. The catalysed reaction is 2,6-dimethylheptanoyl-CoA + (R)-carnitine = O-2,6-dimethylheptanoyl-(R)-carnitine + CoA. In terms of biological role, catalyzes the reversible transfer of acyl groups from carnitine to coenzyme A (CoA) and regulates the acyl-CoA/CoA ratio. Also plays a crucial role in the transport of fatty acids for beta-oxidation. Responsible for the synthesis of short- and branched-chain acylcarnitines. Active towards some branched-chain amino acid oxidation pathway (BCAAO) intermediates. Trans-2-enoyl-CoAs and 2-methylacyl-CoAs are poor substrates. The polypeptide is Carnitine O-acetyltransferase (Rattus norvegicus (Rat)).